Reading from the N-terminus, the 1530-residue chain is DNA-directed RNA polymerase III subunit RPC1 (1530 aa).

Residues Cys74, Cys77, Cys84, His87, Cys114, Cys117, and Cys161 each coordinate Zn(2+). Residues Asp503, Asp505, and Asp507 each contribute to the Mg(2+) site. A bridging helix region spans residues 846 to 858; the sequence is PTEFFFHTMAGRE. Residues 992-1001 show a composition bias toward basic and acidic residues; the sequence is EEQESREDAL. 2 disordered regions span residues 992–1016 and 1057–1099; these read EEQE…SRPR and NLLN…SKEG.

This sequence belongs to the RNA polymerase beta' chain family. As to quaternary structure, component of the RNA polymerase III (Pol III) complex consisting of 17 subunits.

It is found in the nucleus. It catalyses the reaction RNA(n) + a ribonucleoside 5'-triphosphate = RNA(n+1) + diphosphate. Its function is as follows. DNA-dependent RNA polymerase catalyzes the transcription of DNA into RNA using the four ribonucleoside triphosphates as substrates. Largest and catalytic core component of RNA polymerase III which synthesizes small RNAs, such as 5S rRNA and tRNAs. Forms the polymerase active center together with the second largest subunit. A single-stranded DNA template strand of the promoter is positioned within the central active site cleft of Pol III. A bridging helix emanates from RPC1 and crosses the cleft near the catalytic site and is thought to promote translocation of Pol III by acting as a ratchet that moves the RNA-DNA hybrid through the active site by switching from straight to bent conformations at each step of nucleotide addition. The sequence is that of DNA-directed RNA polymerase III subunit RPC1 from Trypanosoma brucei brucei.